The following is a 320-amino-acid chain: Protease HtpX homolog (320 aa).

The next 2 membrane-spanning stretches (helical) occupy residues 6 to 26 (TAML…LIGG) and 28 to 48 (AGMM…YWNS). Zn(2+) is bound at residue histidine 130. Residue glutamate 131 is part of the active site. Histidine 134 provides a ligand contact to Zn(2+). The next 2 membrane-spanning stretches (helical) occupy residues 145–165 (ITAT…FFGG) and 173–193 (PLGF…AMLV). Zn(2+) is bound at residue glutamate 202. The disordered stretch occupies residues 281 to 320 (GGMNVSTPPVRAANPSRKSRSVPDTGLGRGGSQPPKGPWS).

It belongs to the peptidase M48B family. It depends on Zn(2+) as a cofactor.

Its subcellular location is the cell inner membrane. This Rhizobium leguminosarum bv. trifolii (strain WSM2304) protein is Protease HtpX homolog.